A 319-amino-acid polypeptide reads, in one-letter code: Acetyl-coenzyme A carboxylase carboxyl transferase subunit alpha (319 aa).

Residues 32–293 enclose the CoA carboxyltransferase C-terminal domain; that stretch reads NVETEVRALR…KAVLLNELDA (262 aa).

It belongs to the AccA family. As to quaternary structure, acetyl-CoA carboxylase is a heterohexamer composed of biotin carboxyl carrier protein (AccB), biotin carboxylase (AccC) and two subunits each of ACCase subunit alpha (AccA) and ACCase subunit beta (AccD).

Its subcellular location is the cytoplasm. It carries out the reaction N(6)-carboxybiotinyl-L-lysyl-[protein] + acetyl-CoA = N(6)-biotinyl-L-lysyl-[protein] + malonyl-CoA. It functions in the pathway lipid metabolism; malonyl-CoA biosynthesis; malonyl-CoA from acetyl-CoA: step 1/1. Functionally, component of the acetyl coenzyme A carboxylase (ACC) complex. First, biotin carboxylase catalyzes the carboxylation of biotin on its carrier protein (BCCP) and then the CO(2) group is transferred by the carboxyltransferase to acetyl-CoA to form malonyl-CoA. The protein is Acetyl-coenzyme A carboxylase carboxyl transferase subunit alpha of Xanthomonas oryzae pv. oryzae (strain MAFF 311018).